Consider the following 507-residue polypeptide: ATP synthase subunit alpha, chloroplastic (507 aa).

An ATP-binding site is contributed by 170 to 177 (GDRQTGKT). At threonine 257 the chain carries Phosphothreonine.

The protein belongs to the ATPase alpha/beta chains family. In terms of assembly, F-type ATPases have 2 components, CF(1) - the catalytic core - and CF(0) - the membrane proton channel. CF(1) has five subunits: alpha(3), beta(3), gamma(1), delta(1), epsilon(1). CF(0) has four main subunits: a, b, b' and c.

It is found in the plastid. Its subcellular location is the chloroplast thylakoid membrane. It carries out the reaction ATP + H2O + 4 H(+)(in) = ADP + phosphate + 5 H(+)(out). Produces ATP from ADP in the presence of a proton gradient across the membrane. The alpha chain is a regulatory subunit. The polypeptide is ATP synthase subunit alpha, chloroplastic (Arabis hirsuta (Hairy rock-cress)).